Here is a 541-residue protein sequence, read N- to C-terminus: Chaperonin GroEL (541 aa).

Residues 29 to 32, 86 to 90, Gly-413, and Asp-494 each bind ATP; these read TLGP and DGTTT.

Belongs to the chaperonin (HSP60) family. As to quaternary structure, forms a cylinder of 14 subunits composed of two heptameric rings stacked back-to-back. Interacts with the co-chaperonin GroES.

The protein resides in the cytoplasm. It carries out the reaction ATP + H2O + a folded polypeptide = ADP + phosphate + an unfolded polypeptide.. In terms of biological role, together with its co-chaperonin GroES, plays an essential role in assisting protein folding. The GroEL-GroES system forms a nano-cage that allows encapsulation of the non-native substrate proteins and provides a physical environment optimized to promote and accelerate protein folding. The chain is Chaperonin GroEL from Acetivibrio thermocellus (strain ATCC 27405 / DSM 1237 / JCM 9322 / NBRC 103400 / NCIMB 10682 / NRRL B-4536 / VPI 7372) (Clostridium thermocellum).